We begin with the raw amino-acid sequence, 242 residues long: Ribose-5-phosphate isomerase A (242 aa).

Substrate-binding positions include 39–42, 95–98, and 108–111; these read SGST, DGAD, and KGGG. Catalysis depends on Glu117, which acts as the Proton acceptor. Lys135 contributes to the substrate binding site.

Belongs to the ribose 5-phosphate isomerase family. Homodimer.

The catalysed reaction is aldehydo-D-ribose 5-phosphate = D-ribulose 5-phosphate. It participates in carbohydrate degradation; pentose phosphate pathway; D-ribose 5-phosphate from D-ribulose 5-phosphate (non-oxidative stage): step 1/1. Catalyzes the reversible conversion of ribose-5-phosphate to ribulose 5-phosphate. The polypeptide is Ribose-5-phosphate isomerase A (Chlamydia trachomatis serovar A (strain ATCC VR-571B / DSM 19440 / HAR-13)).